Reading from the N-terminus, the 252-residue chain is Outer kinetochore KNL1 complex subunit ZWINT (252 aa).

The disordered stretch occupies residues 80–99 (QSPDALASEDASRQKATETK). The span at 89-99 (DASRQKATETK) shows a compositional bias: basic and acidic residues. A coiled-coil region spans residues 120–221 (LSEALPQVKE…QRNQSYLQLL (102 aa)). Phosphoserine occurs at positions 216 and 249.

In terms of assembly, component of the KNL1 complex composed of KNL1 and ZWINT. Part of the ten-subunit outer kinetochore KMN network that includes the KNL1, MIS12 and NDC80 complexes; a bioriented kinetochore contains approximately 150 copies of the network. Interacts with the MIS12 complex subunits MIS12 DSN1, and PMF1. Interacts with the NDC80 complex subunit NDC80 during mitosis. Interacts with ZW10. Interacts with CETN3.

The protein resides in the nucleus. It localises to the chromosome. It is found in the centromere. Its subcellular location is the kinetochore. Acts as a component of the outer kinetochore KNL1 complex that serves as a docking point for spindle assembly checkpoint components and mediates microtubule-kinetochore interactions. Kinetochores, consisting of a centromere-associated inner segment and a microtubule-contacting outer segment, play a crucial role in chromosome segregation by mediating the physical connection between centromeric DNA and spindle microtubules. The outer kinetochore is made up of the ten-subunit KMN network, comprising the MIS12, NDC80 and KNL1 complexes, and auxiliary microtubule-associated components; together they connect the outer kinetochore with the inner kinetochore, bind microtubules, and mediate interactions with mitotic checkpoint proteins that delay anaphase until chromosomes are bioriented on the spindle. Targets the RZZ complex to the kinetochore at prometaphase. Recruits MAD2L1 to the kinetochore, but is not required for BUB1B localization. In addition to orienting mitotic chromosomes, it is also essential for alignment of homologous chromosomes during meiotic metaphase I. In meiosis I, required to activate the spindle assembly checkpoint at unattached kinetochores to correct erroneous kinetochore-microtubule attachments. The polypeptide is Outer kinetochore KNL1 complex subunit ZWINT (Zwint) (Mus musculus (Mouse)).